A 630-amino-acid polypeptide reads, in one-letter code: ATP-dependent zinc metalloprotease FtsH 2 (630 aa).

Residues 1-8 are Cytoplasmic-facing; it reads MNNNPNRR. The chain crosses the membrane as a helical span at residues 9–29; sequence GSLIGPLFIYFILAMLIFMSI. Topologically, residues 30–110 are periplasmic; that stretch reads SQLNTSNITE…YIQNTGASWW (81 aa). The helical transmembrane segment at 111–131 threads the bilayer; that stretch reads VTMLIYMLPLIILMFFWFWMF. Residues 132–630 are Cytoplasmic-facing; that stretch reads RRSGTGEGIP…KETNLFVSYA (499 aa). 203–210 is a binding site for ATP; the sequence is GPPGTGKT. Zn(2+) is bound at residue H425. Residue E426 is part of the active site. Zn(2+) is bound by residues H429 and D502.

This sequence in the central section; belongs to the AAA ATPase family. The protein in the C-terminal section; belongs to the peptidase M41 family. As to quaternary structure, homohexamer. Zn(2+) serves as cofactor.

The protein localises to the cell inner membrane. Functionally, acts as a processive, ATP-dependent zinc metallopeptidase for both cytoplasmic and membrane proteins. Plays a role in the quality control of integral membrane proteins. The chain is ATP-dependent zinc metalloprotease FtsH 2 from Petrotoga mobilis (strain DSM 10674 / SJ95).